We begin with the raw amino-acid sequence, 187 residues long: Dihydrofolate reductase 2, mitochondrial (187 aa).

In terms of domain architecture, DHFR spans 4–185; it reads LLNCIVAVSQ…IKYKFEVCEK (182 aa). Residues Ala10 and 16-22 contribute to the NADP(+) site; that span reads GIGKNGD. A substrate-binding site is contributed by 31–36; that stretch reads EFRYFQ. Residue 55-57 participates in NADP(+) binding; it reads RKT. Arg71 serves as a coordination point for substrate. NADP(+) is bound by residues 77-79 and 117-124; these read SRE and GGSSVYKE.

The protein belongs to the dihydrofolate reductase family. Expressed in numerous cell lines.

It localises to the mitochondrion. The protein resides in the mitochondrion matrix. It is found in the mitochondrion inner membrane. It carries out the reaction (6S)-5,6,7,8-tetrahydrofolate + NADP(+) = 7,8-dihydrofolate + NADPH + H(+). It participates in cofactor biosynthesis; tetrahydrofolate biosynthesis; 5,6,7,8-tetrahydrofolate from 7,8-dihydrofolate: step 1/1. Functionally, key enzyme in folate metabolism. Contributes to the de novo mitochondrial thymidylate biosynthesis pathway. Required to prevent uracil accumulation in mtDNA. Binds its own mRNA and that of DHFR. The chain is Dihydrofolate reductase 2, mitochondrial from Homo sapiens (Human).